A 935-amino-acid polypeptide reads, in one-letter code: Disintegrin and metalloproteinase domain-containing protein 22 (935 aa).

An N-terminal signal peptide occupies residues 1-24 (MHINGGPLASWICCVIGSIHLAHA). Residues 25–227 (STRPENGGTS…QQTRSQRKKR (203 aa)) constitute a propeptide that is removed on maturation. Asn167 and Asn210 each carry an N-linked (GlcNAc...) asparagine glycan. Residues 228–736 (QTRRYPRNVE…NRDEGVISTN (509 aa)) are Extracellular-facing. Positions 241-440 (KYVELMIVND…GGGACLFNKP (200 aa)) constitute a Peptidase M12B domain. 17 cysteine pairs are disulfide-bonded: Cys351–Cys435, Cys394–Cys419, Cys396–Cys403, Cys449–Cys479, Cys460–Cys476, Cys462–Cys468, Cys475–Cys496, Cys487–Cys493, Cys492–Cys518, Cys505–Cys525, Cys512–Cys544, Cys537–Cys549, Cys556–Cys607, Cys571–Cys637, Cys585–Cys595, Cys602–Cys665, and Cys659–Cys670. The Disintegrin domain maps to 446–533 (PPECGNGFVE…QCPANIHKLD (88 aa)). Asn521 carries N-linked (GlcNAc...) asparagine glycosylation. Residues Asn609 and Asn636 are each glycosylated (N-linked (GlcNAc...) asparagine). N-linked (GlcNAc...) asparagine glycosylation occurs at Asn677. An EGF-like domain is found at 677-713 (NFSTCLGSTNKICSGHGVCSNEVRCICDRFWTGEDCS). Disulfide bonds link Cys681–Cys695, Cys689–Cys701, and Cys703–Cys712. Residues 737 to 757 (IIIGAIAGTILVLALVLGITA) traverse the membrane as a helical segment. Over 758 to 935 (WGYKNYRRER…QSARLWETSI (178 aa)) the chain is Cytoplasmic. The segment at 850 to 935 (VSDVCENGRP…QSARLWETSI (86 aa)) is disordered. Positions 859 to 870 (PRSNSWQGNVTS) are enriched in polar residues. A compositionally biased stretch (basic residues) spans 871–882 (SRKKLRGKRFRP). The span at 891 to 906 (SPAKSPSSSTGSIASS) shows a compositional bias: low complexity.

In terms of processing, the precursor is cleaved by a furin endopeptidase. Low levels in adult tissues. Not detected in developing embryos.

Its subcellular location is the cell membrane. Functionally, probable ligand for integrin in the brain. This is a non catalytic metalloprotease-like protein. The polypeptide is Disintegrin and metalloproteinase domain-containing protein 22 (adam22) (Xenopus laevis (African clawed frog)).